We begin with the raw amino-acid sequence, 133 residues long: Fatty acid-binding protein, heart (133 aa).

The residue at position 2 (Ala2) is an N-acetylalanine. Thr8 is subject to Phosphothreonine. Tyr20 carries the phosphotyrosine; by Tyr-kinases modification. Phosphoserine is present on Ser23. The residue at position 30 (Thr30) is a Phosphothreonine. At Ser83 the chain carries Phosphoserine. Position 127-129 (127-129 (RTY)) interacts with (9Z)-octadecenoate. 127–129 (RTY) provides a ligand contact to hexadecanoate. 127-129 (RTY) contacts octadecanoate.

Heart, but also skeletal muscle, kidney, brain and mammary gland.

It localises to the cytoplasm. In terms of biological role, FABPs are thought to play a role in the intracellular transport of long-chain fatty acids and their acyl-CoA esters. This Rattus norvegicus (Rat) protein is Fatty acid-binding protein, heart (Fabp3).